Reading from the N-terminus, the 573-residue chain is Sulfite reductase [NADPH] hemoprotein beta-component (573 aa).

Positions 436, 442, 481, and 485 each coordinate [4Fe-4S] cluster. Position 485 (Cys485) interacts with siroheme.

It belongs to the nitrite and sulfite reductase 4Fe-4S domain family. In terms of assembly, alpha(8)-beta(8). The alpha component is a flavoprotein, the beta component is a hemoprotein. Requires siroheme as cofactor. [4Fe-4S] cluster is required as a cofactor.

The catalysed reaction is hydrogen sulfide + 3 NADP(+) + 3 H2O = sulfite + 3 NADPH + 4 H(+). Its pathway is sulfur metabolism; hydrogen sulfide biosynthesis; hydrogen sulfide from sulfite (NADPH route): step 1/1. In terms of biological role, component of the sulfite reductase complex that catalyzes the 6-electron reduction of sulfite to sulfide. This is one of several activities required for the biosynthesis of L-cysteine from sulfate. In Alteromonas mediterranea (strain DSM 17117 / CIP 110805 / LMG 28347 / Deep ecotype), this protein is Sulfite reductase [NADPH] hemoprotein beta-component.